A 608-amino-acid polypeptide reads, in one-letter code: MKWVTFLLLLFVSDSAFSRGLFRRDAHKSEIAHRFKDLGEQHFKGLVLIAFSQFLQKCPYEEHVKLVNEVTDFAKTCVADESAENCDKSLHTLFGDKLCAIPTLRDSYGELADCCAKKEPERNECFLKHKDDHPNLPPFVRPDAEAMCTSFQENAVTFMGHYLHEVARRHPYFYAPELLYYAEKYSAIMTECCGEADKAACITPKLDALKEKALASSVNQRLKCSSLQRFGQRAFKAWAVARMSQKFPKADFAEITKLATDLTKLTEECCHGDLLECADDRAELAKYMCENQASISSKLQACCDKPVLKKSHCLSEVENDDLPADLPSLAADFVEDKEVCKNYAEAKDVFLGTFLYEYARRHPDYSVALLLRLAKKYEATLEKCCAEADPSACYGKVLDEFQPLVEEPKNLVKANCELFEKLGEYGFQNALIVRYTQKAPQVSTPTLVEAARNLGKVGSKCCVLPEAQRLPCVEDYISAILNRVCVLHEKTPVSEQVTKCCTGSVVERRPCFSALPVDETYVPKEFKAETFTFHADICSLPEKEKQMKKQAALVELVKHKPKATGPQLRTVLGEFTAFLDKCCKAEDKEACFSEDGPKLVASSQAALA.

A signal peptide spans 1-18 (MKWVTFLLLLFVSDSAFS). The propeptide occupies 19–24 (RGLFRR). Albumin domains follow at residues 19 to 211 (RGLF…ALKE), 212 to 403 (KALA…EFQP), and 404 to 601 (LVEE…KLVA). His27 contributes to the Cu cation binding site. At Ser29 the chain carries Phosphoserine. Positions 30 and 37 each coordinate Ca(2+). Cys77 and Cys86 form a disulfide bridge. Residues Ser82 and Ser89 each carry the phosphoserine modification. His91 contacts Zn(2+). 6 disulfides stabilise this stretch: Cys99/Cys115, Cys114/Cys125, Cys148/Cys193, Cys192/Cys201, Cys224/Cys270, and Cys269/Cys277. A Ca(2+)-binding site is contributed by Glu268. Residues His271 and Asp273 each coordinate Zn(2+). Residues Asp273, Glu276, and Asp279 each contribute to the Ca(2+) site. 8 cysteine pairs are disulfide-bonded: Cys289–Cys303, Cys302–Cys313, Cys340–Cys385, Cys384–Cys393, Cys416–Cys462, Cys461–Cys472, Cys485–Cys501, and Cys500–Cys511. Ser297 carries the post-translational modification Phosphoserine. The residue at position 443 (Ser443) is a Phosphoserine. A phosphothreonine mark is found at Thr444 and Thr446. Lys460 is subject to N6-succinyllysine. Position 513 is a phosphoserine (Ser513). 2 cysteine pairs are disulfide-bonded: Cys538-Cys583 and Cys582-Cys591. Lys543 carries the N6-succinyllysine modification. Residue Lys558 is modified to N6-methyllysine. Thr570 is subject to Phosphothreonine. The residue at position 588 (Lys588) is an N6-succinyllysine.

The protein belongs to the ALB/AFP/VDB family. As to quaternary structure, interacts with FCGRT; this interaction regulates ALB homeostasis. Interacts with TASOR. In plasma, occurs in a covalently-linked complex with chromophore-bound alpha-1-microglobulin; this interaction does not prevent fatty acid binding to ALB. As to expression, plasma.

It localises to the secreted. Binds water, Ca(2+), Na(+), K(+), fatty acids, hormones, bilirubin and drugs. Its main function is the regulation of the colloidal osmotic pressure of blood. Major zinc transporter in plasma, typically binds about 80% of all plasma zinc. Major calcium and magnesium transporter in plasma, binds approximately 45% of circulating calcium and magnesium in plasma. Potentially has more than two calcium-binding sites and might additionally bind calcium in a non-specific manner. The shared binding site between zinc and calcium at residue Asp-273 suggests a crosstalk between zinc and calcium transport in the blood. The rank order of affinity is zinc &gt; calcium &gt; magnesium. Binds to the bacterial siderophore enterobactin and inhibits enterobactin-mediated iron uptake of E.coli from ferric transferrin, and may thereby limit the utilization of iron and growth of enteric bacteria such as E.coli. Does not prevent iron uptake by the bacterial siderophore aerobactin. This chain is Albumin, found in Mesocricetus auratus (Golden hamster).